The sequence spans 96 residues: Probable quinol oxidase subunit 4 (96 aa).

3 helical membrane passes run 8 to 28 (TVGF…TLYT), 37 to 57 (TIIF…FMHL), and 68 to 88 (FKVI…YWVM).

This sequence belongs to the cytochrome c oxidase bacterial subunit 4 family.

It localises to the cell membrane. The enzyme catalyses 2 a quinol + O2 = 2 a quinone + 2 H2O. In terms of biological role, catalyzes quinol oxidation with the concomitant reduction of oxygen to water. This is Probable quinol oxidase subunit 4 (qoxD) from Staphylococcus haemolyticus (strain JCSC1435).